Here is a 207-residue protein sequence, read N- to C-terminus: LexA repressor (207 aa).

The segment at residues 28 to 48 (RAEIARELGFRSANAAEEHLK) is a DNA-binding region (H-T-H motif). Catalysis depends on for autocatalytic cleavage activity residues Ser124 and Lys161.

This sequence belongs to the peptidase S24 family. In terms of assembly, homodimer.

The enzyme catalyses Hydrolysis of Ala-|-Gly bond in repressor LexA.. In terms of biological role, represses a number of genes involved in the response to DNA damage (SOS response), including recA and lexA. In the presence of single-stranded DNA, RecA interacts with LexA causing an autocatalytic cleavage which disrupts the DNA-binding part of LexA, leading to derepression of the SOS regulon and eventually DNA repair. This is LexA repressor from Vibrio vulnificus (strain CMCP6).